The primary structure comprises 269 residues: 3-methyl-2-oxobutanoate hydroxymethyltransferase (269 aa).

Mg(2+) is bound by residues D50 and D89. 3-methyl-2-oxobutanoate-binding positions include 50–51 (DS), D89, and K118. E120 is a Mg(2+) binding site. The active-site Proton acceptor is E187.

Belongs to the PanB family. In terms of assembly, homodecamer; pentamer of dimers. The cofactor is Mg(2+).

It localises to the cytoplasm. The enzyme catalyses 3-methyl-2-oxobutanoate + (6R)-5,10-methylene-5,6,7,8-tetrahydrofolate + H2O = 2-dehydropantoate + (6S)-5,6,7,8-tetrahydrofolate. It participates in cofactor biosynthesis; (R)-pantothenate biosynthesis; (R)-pantoate from 3-methyl-2-oxobutanoate: step 1/2. Functionally, catalyzes the reversible reaction in which hydroxymethyl group from 5,10-methylenetetrahydrofolate is transferred onto alpha-ketoisovalerate to form ketopantoate. This chain is 3-methyl-2-oxobutanoate hydroxymethyltransferase, found in Nitrosomonas eutropha (strain DSM 101675 / C91 / Nm57).